We begin with the raw amino-acid sequence, 221 residues long: Urease accessory protein UreE (221 aa).

A disordered region spans residues 160–194 (VPGTNKTTGDLAEEEQETERHEPHAHAIGEHHHEK). Residues 177–194 (TERHEPHAHAIGEHHHEK) show a composition bias toward basic and acidic residues.

The protein belongs to the UreE family.

It is found in the cytoplasm. Functionally, involved in urease metallocenter assembly. Binds nickel. Probably functions as a nickel donor during metallocenter assembly. This is Urease accessory protein UreE from Bifidobacterium longum subsp. infantis (strain ATCC 15697 / DSM 20088 / JCM 1222 / NCTC 11817 / S12).